We begin with the raw amino-acid sequence, 197 residues long: Probable GTP-binding protein EngB (197 aa).

The 174-residue stretch at 22–195 folds into the EngB-type G domain; it reads NLPEIAFVGR…VDYLFDDLVE (174 aa). GTP-binding positions include 30–37, 57–61, 75–78, 142–145, and 174–176; these read GRSNVGKS, GKTRL, DLPG, TKSD, and FSS. Ser-37 and Thr-59 together coordinate Mg(2+).

This sequence belongs to the TRAFAC class TrmE-Era-EngA-EngB-Septin-like GTPase superfamily. EngB GTPase family. It depends on Mg(2+) as a cofactor.

Its function is as follows. Necessary for normal cell division and for the maintenance of normal septation. The polypeptide is Probable GTP-binding protein EngB (Clostridium perfringens (strain SM101 / Type A)).